We begin with the raw amino-acid sequence, 76 residues long: Putative phosphotransferase enzyme IIA component YyzE (76 aa).

Residues 1–76 (MVTPTKHAIG…LHQKIFTVVS (76 aa)) form the PTS EIIA type-1 domain. The active-site Tele-phosphohistidine intermediate is the histidine 22.

It is found in the cytoplasm. In terms of biological role, the phosphoenolpyruvate-dependent sugar phosphotransferase system (PTS), a major carbohydrate active -transport system, catalyzes the phosphorylation of incoming sugar substrates concomitant with their translocation across the cell membrane. This is Putative phosphotransferase enzyme IIA component YyzE (yyzE) from Bacillus subtilis (strain 168).